Here is a 71-residue protein sequence, read N- to C-terminus: UPF0499 protein ACLA_083080 (71 aa).

The first 18 residues, 1–18, serve as a signal peptide directing secretion; that stretch reads MKFLNILTLAFITGMASA. 3 disulfide bridges follow: cysteine 44–cysteine 58, cysteine 48–cysteine 61, and cysteine 54–cysteine 68.

Belongs to the UPF0499 family.

It is found in the secreted. This chain is UPF0499 protein ACLA_083080, found in Aspergillus clavatus (strain ATCC 1007 / CBS 513.65 / DSM 816 / NCTC 3887 / NRRL 1 / QM 1276 / 107).